We begin with the raw amino-acid sequence, 165 residues long: Late embryogenesis abundant protein D-113 (165 aa).

The span at 1–13 (MQSMKDAAASAKA) shows a compositional bias: low complexity. Disordered stretches follow at residues 1–76 (MQSM…IGGT) and 92–165 (GGTG…YRSY). The span at 14–60 (GMEKAKASMQEKVDQMKTRDPNEKEMARERKEERQEDAELRKQEARH) shows a compositional bias: basic and acidic residues. A compositionally biased stretch (gly residues) spans 67-76 (HVGGGGIGGT). Polar residues predominate over residues 132–155 (TTGNQDFPNAASNNAGTRRNTRGG).

It belongs to the LEA type 1 family.

LEA proteins are late embryonic proteins abundant in higher plant seed embryos. There are two subsets of LEA proteins (5a and 5b), the first ones are expressed when the cotyledon weight reach 80 mg and the second set are expressed above 100 mg. The function of those proteins is not known. The polypeptide is Late embryogenesis abundant protein D-113 (Gossypium hirsutum (Upland cotton)).